The primary structure comprises 151 residues: Phosphoribosyl-AMP cyclohydrolase (151 aa).

The segment covering 1–13 (MMTLTFASPPQNK) has biased composition (polar residues). The segment at 1 to 20 (MMTLTFASPPQNKSDLETGP) is disordered. Residue Asp93 coordinates Mg(2+). Cys94 serves as a coordination point for Zn(2+). Mg(2+) is bound by residues Asp95 and Asp97. Residues Cys112 and Cys119 each contribute to the Zn(2+) site.

Belongs to the PRA-CH family. As to quaternary structure, homodimer. It depends on Mg(2+) as a cofactor. Zn(2+) is required as a cofactor.

The protein resides in the cytoplasm. The catalysed reaction is 1-(5-phospho-beta-D-ribosyl)-5'-AMP + H2O = 1-(5-phospho-beta-D-ribosyl)-5-[(5-phospho-beta-D-ribosylamino)methylideneamino]imidazole-4-carboxamide. The protein operates within amino-acid biosynthesis; L-histidine biosynthesis; L-histidine from 5-phospho-alpha-D-ribose 1-diphosphate: step 3/9. In terms of biological role, catalyzes the hydrolysis of the adenine ring of phosphoribosyl-AMP. The polypeptide is Phosphoribosyl-AMP cyclohydrolase (Sinorhizobium medicae (strain WSM419) (Ensifer medicae)).